The chain runs to 289 residues: MKLSFTKMHGAGNDFVVLDGYTRALPPLTGAQVRALADRHFGIGADQLLLVEKPTVDGADFKYRIFNCDGGEVEHCGNGARCFVKFVRDHGLTGKASVRVEVKHGVITLTMQDNGEVVVDMGAPVFEPARVPFDASGLDGRREGADTLWPLPVNGVTRWISVVSMGNPHAVQIVDDAEAFAVRVDGPAIERDPRFPQRVNAGFMQIVSRHEVNLRVYERGAGETLACGTGACAAVAAGIRRGRLDSPVTVHTHGGTLTISWNGACDERAPLMMAGPATTVFEGVIELPA.

Residues Asn13, Gln47, and Asn67 each contribute to the substrate site. Cys76 acts as the Proton donor in catalysis. Substrate is bound by residues 77–78 (GN), Asn167, Asn200, and 218–219 (ER). Residue Cys227 is the Proton acceptor of the active site. 228–229 (GT) is a binding site for substrate.

It belongs to the diaminopimelate epimerase family. As to quaternary structure, homodimer.

Its subcellular location is the cytoplasm. It carries out the reaction (2S,6S)-2,6-diaminopimelate = meso-2,6-diaminopimelate. It functions in the pathway amino-acid biosynthesis; L-lysine biosynthesis via DAP pathway; DL-2,6-diaminopimelate from LL-2,6-diaminopimelate: step 1/1. Functionally, catalyzes the stereoinversion of LL-2,6-diaminopimelate (L,L-DAP) to meso-diaminopimelate (meso-DAP), a precursor of L-lysine and an essential component of the bacterial peptidoglycan. The protein is Diaminopimelate epimerase of Burkholderia mallei (strain NCTC 10247).